Here is a 371-residue protein sequence, read N- to C-terminus: Glycerate kinase (371 aa).

This sequence belongs to the glycerate kinase type-1 family.

The enzyme catalyses (R)-glycerate + ATP = (2R)-3-phosphoglycerate + ADP + H(+). This Neisseria meningitidis serogroup B (strain ATCC BAA-335 / MC58) protein is Glycerate kinase (glxK).